We begin with the raw amino-acid sequence, 493 residues long: Glutamate--tRNA ligase (493 aa).

Residues 10-20 (PSPTGDPHVGT) carry the 'HIGH' region motif. Positions 251–255 (KLSKR) match the 'KMSKS' region motif. Lys254 contributes to the ATP binding site.

This sequence belongs to the class-I aminoacyl-tRNA synthetase family. Glutamate--tRNA ligase type 1 subfamily. As to quaternary structure, monomer.

It is found in the cytoplasm. The catalysed reaction is tRNA(Glu) + L-glutamate + ATP = L-glutamyl-tRNA(Glu) + AMP + diphosphate. Its function is as follows. Catalyzes the attachment of glutamate to tRNA(Glu) in a two-step reaction: glutamate is first activated by ATP to form Glu-AMP and then transferred to the acceptor end of tRNA(Glu). The polypeptide is Glutamate--tRNA ligase (Pseudomonas putida (strain ATCC 47054 / DSM 6125 / CFBP 8728 / NCIMB 11950 / KT2440)).